Here is a 295-residue protein sequence, read N- to C-terminus: Glycine N-methyltransferase (295 aa).

(6S)-5-methyl-5,6,7,8-tetrahydrofolate contacts are provided by Ser4 and Tyr6. Phosphoserine is present on Ser10. S-adenosyl-L-methionine-binding residues include Tyr22, Trp31, Tyr34, and Arg41. Tyr34 carries the post-translational modification Phosphotyrosine. Residue Lys46 is modified to N6-succinyllysine. S-adenosyl-L-methionine-binding positions include Ala65, Asp86–Ser88, Asn117–Trp118, Leu139–Ser142, and Arg178. 3 positions are modified to N6-succinyllysine: Lys193, Lys198, and Lys203. His217 serves as a coordination point for (6S)-5-methyl-5,6,7,8-tetrahydrofolate. Residue Tyr223 participates in S-adenosyl-L-methionine binding. A (6S)-5-methyl-5,6,7,8-tetrahydrofolate-binding site is contributed by Arg242.

The protein belongs to the class I-like SAM-binding methyltransferase superfamily. Glycine N-methyltransferase family. In terms of assembly, homotetramer. Abundant in liver.

It localises to the cytoplasm. It catalyses the reaction glycine + S-adenosyl-L-methionine = sarcosine + S-adenosyl-L-homocysteine + H(+). Inhibited by 5-methyltetrahydrofolate monoglutamate and by 5-methyltetrahydrofolate pentaglutamate, inhibition is much more effective by the pentaglutamate form than by the monoglutamate form. Two molecules of 5-methyltetrahydrofolate are bound per tetramer. The binding sites are localized between subunits. Inhibitor binding may preclude movements of the polypeptide chain that are necessary for enzyme activity. Functionally, catalyzes the methylation of glycine by using S-adenosylmethionine (AdoMet) to form N-methylglycine (sarcosine) with the concomitant production of S-adenosylhomocysteine (AdoHcy), a reaction regulated by the binding of 5-methyltetrahydrofolate. Plays an important role in the regulation of methyl group metabolism by regulating the ratio between S-adenosyl-L-methionine and S-adenosyl-L-homocysteine. This chain is Glycine N-methyltransferase (GNMT), found in Oryctolagus cuniculus (Rabbit).